Here is a 282-residue protein sequence, read N- to C-terminus: 2-dehydro-3-deoxyphosphooctonate aldolase (282 aa).

It belongs to the KdsA family.

Its subcellular location is the cytoplasm. It carries out the reaction D-arabinose 5-phosphate + phosphoenolpyruvate + H2O = 3-deoxy-alpha-D-manno-2-octulosonate-8-phosphate + phosphate. Its pathway is carbohydrate biosynthesis; 3-deoxy-D-manno-octulosonate biosynthesis; 3-deoxy-D-manno-octulosonate from D-ribulose 5-phosphate: step 2/3. The protein operates within bacterial outer membrane biogenesis; lipopolysaccharide biosynthesis. In Shewanella baltica (strain OS185), this protein is 2-dehydro-3-deoxyphosphooctonate aldolase.